A 120-amino-acid polypeptide reads, in one-letter code: Large ribosomal subunit protein bL12 (120 aa).

This sequence belongs to the bacterial ribosomal protein bL12 family. In terms of assembly, homodimer. Part of the ribosomal stalk of the 50S ribosomal subunit. Forms a multimeric L10(L12)X complex, where L10 forms an elongated spine to which 2 to 4 L12 dimers bind in a sequential fashion. Binds GTP-bound translation factors.

Functionally, forms part of the ribosomal stalk which helps the ribosome interact with GTP-bound translation factors. Is thus essential for accurate translation. In Alkaliphilus metalliredigens (strain QYMF), this protein is Large ribosomal subunit protein bL12.